We begin with the raw amino-acid sequence, 368 residues long: Trans-enoyl reductase thnE (368 aa).

53-56 (VDVK) is an NADP(+) binding site. 140 to 147 (LATATAAY) serves as a coordination point for substrate. Residues 179-182 (STAT), 202-205 (SPSN), Tyr220, and 267-268 (VE) contribute to the NADP(+) site. 289–293 (VMTVW) serves as a coordination point for substrate. NADP(+) is bound at residue 358 to 359 (PS).

It belongs to the zinc-containing alcohol dehydrogenase family. As to quaternary structure, monomer.

The catalysed reaction is malate + 6 malonyl-CoA + acetyl-CoA + 2 AH2 + 2 S-adenosyl-L-methionine + 5 NADPH + 9 H(+) = trihazone A + 2 A + 2 S-adenosyl-L-homocysteine + 6 CO2 + 5 NADP(+) + 7 CoA + 6 H2O. It participates in secondary metabolite biosynthesis. Its function is as follows. Trans-enoyl reductase; part of the gene cluster that produces the tetronate natural products trihazones. The PKS-NRPS synthetase thnA with the help of the trans-enoyl reductase thnE are responsible for the synthesis of the carboxylmethyl containing trihazone A. The PKS portion of thnA synthesizes beta-keto-triene chain from one acetyl-CoA and 6 equivalents of malonyl-CoA, in collaboration with thnE, which selectively reduces the enoyl intermediate during the first and fourth iteration of the PKS. The NRPS domain selects and activates malate, of which the alpha-hydroxyl group attacks the completed polyketide acyl-S-ACP chain to form the ester product. Intramolecular Dieckmann cyclization catalyzed by the terminal reductase domain releases the product as trihazone A from the PKS-NPRS. The pathway begins with the formation of trihazone A by the hybrid PKS-NRPS synthetase thnA and the trans-enoyl reductase thnE. Trihazone A is further decarboxylated by the 2-oxoglutarate-dependent dioxygenase thnC to produce trihazone D. The function of the FAD-dependent monooxygenase thnD has still to be identified. This chain is Trans-enoyl reductase thnE, found in Trichoderma harzianum (Hypocrea lixii).